The following is a 362-amino-acid chain: Microfibril-associated glycoprotein 3 (362 aa).

The first 18 residues, 1-18 (MKLHCCLFTLVASIIVPA), serve as a signal peptide directing secretion. Residues 19–147 (AFVLEDVDFD…LRVIFTSGDM (129 aa)) lie on the Extracellular side of the membrane. 3 N-linked (GlcNAc...) asparagine glycosylation sites follow: Asn-36, Asn-41, and Asn-110. The region spanning 45-137 (PSSFELSASS…SPIRASYSVT (93 aa)) is the Ig-like C2-type domain. Cys-73 and Cys-124 are joined by a disulfide. Residues 148–170 (SVYYMIVCLIAFTITLILNVTRL) traverse the membrane as a helical segment. Residues 171-362 (CMMSSHLRKT…KDGAYENCQL (192 aa)) are Cytoplasmic-facing. Disordered regions lie at residues 285–306 (VINPEMGRSNSPGGDSDDGSLN) and 323–350 (ETKSIDTESQGSSHFSPPDDIGSAESNC). Residues 323–337 (ETKSIDTESQGSSHF) are compositionally biased toward polar residues.

Glycosylated.

The protein resides in the cell membrane. Component of the elastin-associated microfibrils. This Homo sapiens (Human) protein is Microfibril-associated glycoprotein 3 (MFAP3).